The chain runs to 264 residues: COP9 signalosome complex subunit 7b (264 aa).

Ala2 carries the N-acetylalanine modification. A PCI domain is found at 2–159 (AGEQKPSSNL…QLLEVDFCIG (158 aa)). A coiled-coil region spans residues 194–237 (RANQYKENHSRTQQQVEAEVTNIKKTLKATASSSAQEMEQQLAE). The segment covering 223 to 232 (TASSSAQEME) has biased composition (polar residues). The segment at 223–264 (TASSSAQEMEQQLAERECPPHAEQRQPTKKMSKVKGLVSSRH) is disordered. Basic and acidic residues predominate over residues 235-248 (LAERECPPHAEQRQ).

Belongs to the CSN7/EIF3M family. CSN7 subfamily. In terms of assembly, component of the CSN complex, composed of COPS1/GPS1, COPS2, COPS3, COPS4, COPS5, COPS6, COPS7 (COPS7A or COPS7B), COPS8 and COPS9. In the complex, it probably interacts directly with COPS1, COPS2, COPS4, COPS5, COPS6 and COPS8. Interacts with EIF3S6.

The protein resides in the cytoplasm. The protein localises to the nucleus. Functionally, component of the COP9 signalosome complex (CSN), a complex involved in various cellular and developmental processes. The CSN complex is an essential regulator of the ubiquitin (Ubl) conjugation pathway by mediating the deneddylation of the cullin subunits of SCF-type E3 ligase complexes, leading to decrease the Ubl ligase activity of SCF-type complexes such as SCF, CSA or DDB2. The complex is also involved in phosphorylation of p53/TP53, JUN, I-kappa-B-alpha/NFKBIA, ITPK1 and IRF8/ICSBP, possibly via its association with CK2 and PKD kinases. CSN-dependent phosphorylation of TP53 and JUN promotes and protects degradation by the Ubl system, respectively. The polypeptide is COP9 signalosome complex subunit 7b (COPS7B) (Bos taurus (Bovine)).